Consider the following 668-residue polypeptide: Chitin synthase 8 (668 aa).

A compositionally biased stretch (polar residues) spans 1-26; the sequence is MTSRMPTSGHRTSSSSSERGNMSVQQ. Positions 1–62 are disordered; sequence MTSRMPTSGH…PAPLRPGWTL (62 aa). N-linked (GlcNAc...) asparagine glycosylation is found at asparagine 21, asparagine 98, and asparagine 101. Helical transmembrane passes span 136 to 156 and 162 to 182; these read WSLIIGLAGINGALIYIGWKY and FFLVLLSSNTVLQSFMCICII. Residues asparagine 216 and asparagine 476 are each glycosylated (N-linked (GlcNAc...) asparagine). A run of 4 helical transmembrane segments spans residues 522–542, 548–568, 583–603, and 615–635; these read WALGSISNEFVMIFRPGIILI, LIAVITWAITPFIIAAFVELL, VFLGLICVLFFRYLYSFCIGF, and YFAGYVMHLFTSPFMNIIILV.

The protein belongs to the chitin synthase family. Class VIII subfamily.

It localises to the cell membrane. It is found in the cell septum. It catalyses the reaction [(1-&gt;4)-N-acetyl-beta-D-glucosaminyl](n) + UDP-N-acetyl-alpha-D-glucosamine = [(1-&gt;4)-N-acetyl-beta-D-glucosaminyl](n+1) + UDP + H(+). Functionally, polymerizes chitin, a structural polymer of the cell wall and septum, by transferring the sugar moiety of UDP-GlcNAc to the non-reducing end of the growing chitin polymer. Participated in the development of cell wall and plays a critical role in fungal response to environmental stresses. Necessary for pathogenicity and deoxinivalenol (DON) production. The chain is Chitin synthase 8 from Gibberella zeae (strain ATCC MYA-4620 / CBS 123657 / FGSC 9075 / NRRL 31084 / PH-1) (Wheat head blight fungus).